The sequence spans 106 residues: L-rhamnose mutarotase (106 aa).

Y20 provides a ligand contact to substrate. The Proton donor role is filled by H24. Substrate-binding positions include Y43 and 78–79 (WW).

It belongs to the rhamnose mutarotase family. In terms of assembly, homodimer.

It is found in the cytoplasm. The catalysed reaction is alpha-L-rhamnose = beta-L-rhamnose. The protein operates within carbohydrate metabolism; L-rhamnose metabolism. Involved in the anomeric conversion of L-rhamnose. This is L-rhamnose mutarotase from Rhizobium johnstonii (strain DSM 114642 / LMG 32736 / 3841) (Rhizobium leguminosarum bv. viciae).